A 797-amino-acid polypeptide reads, in one-letter code: LPS-assembly protein LptD (797 aa).

The N-terminal stretch at 1–30 is a signal peptide; that stretch reads MKEGRKRLRAGYCYMLAGVVGVASTGSSRA.

The protein belongs to the LptD family. Component of the lipopolysaccharide transport and assembly complex. Interacts with LptE and LptA.

The protein resides in the cell outer membrane. Its function is as follows. Together with LptE, is involved in the assembly of lipopolysaccharide (LPS) at the surface of the outer membrane. The sequence is that of LPS-assembly protein LptD from Hahella chejuensis (strain KCTC 2396).